The sequence spans 505 residues: Lysine--tRNA ligase (505 aa).

Mg(2+)-binding residues include E415 and E422.

This sequence belongs to the class-II aminoacyl-tRNA synthetase family. As to quaternary structure, homodimer. Mg(2+) is required as a cofactor.

The protein localises to the cytoplasm. The catalysed reaction is tRNA(Lys) + L-lysine + ATP = L-lysyl-tRNA(Lys) + AMP + diphosphate. The sequence is that of Lysine--tRNA ligase from Pectobacterium carotovorum subsp. carotovorum (strain PC1).